A 97-amino-acid polypeptide reads, in one-letter code: Large ribosomal subunit protein uL23 (97 aa).

It belongs to the universal ribosomal protein uL23 family. In terms of assembly, part of the 50S ribosomal subunit. Contacts protein L29, and trigger factor when it is bound to the ribosome.

Functionally, one of the early assembly proteins it binds 23S rRNA. One of the proteins that surrounds the polypeptide exit tunnel on the outside of the ribosome. Forms the main docking site for trigger factor binding to the ribosome. This Mesorhizobium japonicum (strain LMG 29417 / CECT 9101 / MAFF 303099) (Mesorhizobium loti (strain MAFF 303099)) protein is Large ribosomal subunit protein uL23.